A 170-amino-acid chain; its full sequence is Cyclic pyranopterin monophosphate synthase (170 aa).

Substrate-binding positions include 89–91 (LCH) and 125–126 (ME). Residue Asp-140 is part of the active site.

The protein belongs to the MoaC family. As to quaternary structure, homohexamer; trimer of dimers.

The catalysed reaction is (8S)-3',8-cyclo-7,8-dihydroguanosine 5'-triphosphate = cyclic pyranopterin phosphate + diphosphate. It participates in cofactor biosynthesis; molybdopterin biosynthesis. Its function is as follows. Catalyzes the conversion of (8S)-3',8-cyclo-7,8-dihydroguanosine 5'-triphosphate to cyclic pyranopterin monophosphate (cPMP). The sequence is that of Cyclic pyranopterin monophosphate synthase from Streptomyces avermitilis (strain ATCC 31267 / DSM 46492 / JCM 5070 / NBRC 14893 / NCIMB 12804 / NRRL 8165 / MA-4680).